The following is a 179-amino-acid chain: Ribosome maturation factor RimM (179 aa).

Residues 100 to 176 enclose the PRC barrel domain; sequence KEEFHLLELI…FLIINPPNGL (77 aa).

The protein belongs to the RimM family. In terms of assembly, binds ribosomal protein uS19.

It is found in the cytoplasm. In terms of biological role, an accessory protein needed during the final step in the assembly of 30S ribosomal subunit, possibly for assembly of the head region. Essential for efficient processing of 16S rRNA. May be needed both before and after RbfA during the maturation of 16S rRNA. It has affinity for free ribosomal 30S subunits but not for 70S ribosomes. In Prochlorococcus marinus (strain MIT 9312), this protein is Ribosome maturation factor RimM.